The following is a 185-amino-acid chain: Large ribosomal subunit protein uL5 (185 aa).

The protein belongs to the universal ribosomal protein uL5 family. In terms of assembly, part of the 50S ribosomal subunit; part of the 5S rRNA subcomplex. Contacts the 5S rRNA and the P site tRNA. Forms a bridge to the 30S subunit in the 70S ribosome. In terms of processing, both N-terminus methionine truncation and retention have been observed for this protein. May be methylated twice, on undetermined residues.

Functionally, this is one of the proteins that bind and probably mediate the attachment of the 5S RNA into the large ribosomal subunit, where it forms part of the central protuberance. In the 70S ribosome it contacts protein S13 of the 30S subunit (bridge B1b), connecting the 2 subunits; this bridge is implicated in subunit movement. Contacts the P site tRNA; the 5S rRNA and some of its associated proteins might help stabilize positioning of ribosome-bound tRNAs. The protein is Large ribosomal subunit protein uL5 of Rhodopseudomonas palustris (strain ATCC BAA-98 / CGA009).